A 285-amino-acid chain; its full sequence is 4-diphosphocytidyl-2-C-methyl-D-erythritol kinase (285 aa).

Residue K10 is part of the active site. 94–104 is a binding site for ATP; sequence PVAAGLGGGSS. The active site involves D136.

The protein belongs to the GHMP kinase family. IspE subfamily.

It catalyses the reaction 4-CDP-2-C-methyl-D-erythritol + ATP = 4-CDP-2-C-methyl-D-erythritol 2-phosphate + ADP + H(+). It participates in isoprenoid biosynthesis; isopentenyl diphosphate biosynthesis via DXP pathway; isopentenyl diphosphate from 1-deoxy-D-xylulose 5-phosphate: step 3/6. Functionally, catalyzes the phosphorylation of the position 2 hydroxy group of 4-diphosphocytidyl-2C-methyl-D-erythritol. The protein is 4-diphosphocytidyl-2-C-methyl-D-erythritol kinase of Latilactobacillus sakei subsp. sakei (strain 23K) (Lactobacillus sakei subsp. sakei).